Consider the following 346-residue polypeptide: Protease inhibitor Egf1.5b (346 aa).

The signal sequence occupies residues 1–28 (MYIDTGIMSNNIFLFAFFALVGLTRIEA). One can recognise a TIL domain in the interval 52-104 (CRENEHYNSTRIECEDECNDRNNKLCYRFQQFCWCNEGYIRNSSHICVKLEDC).

This sequence belongs to the polydnaviridae EGF-like motif protein family. In terms of assembly, interacts with host PAP1, PAP3 and SPH2.

Its function is as follows. Counteracts the host humoral immune response by inhibiting the processing and the amidolytic activity of host PAP1 and PAP3. Thereby, melanization of host hemolymph, normally producing several reactive intermediates toxic for viruses, is deregulated and proper immune response cannot occur. This Microplitis demolitor (Parasitoid wasp) protein is Protease inhibitor Egf1.5b (O5).